The chain runs to 110 residues: Insulin (110 aa).

An N-terminal signal peptide occupies residues 1 to 23 (MALWLQAFTLLVLLVLSSPGAQS). Disulfide bonds link C30-C96, C42-C109, and C95-C100. Positions 56–87 (DVDPLLGFLSPKSAQENEADEYPYKDQGDLKV) are cleaved as a propeptide — c peptide.

Belongs to the insulin family. As to quaternary structure, heterodimer of a B chain and an A chain linked by two disulfide bonds.

The protein localises to the secreted. In terms of biological role, insulin decreases blood glucose concentration. It increases cell permeability to monosaccharides, amino acids and fatty acids. It accelerates glycolysis, the pentose phosphate cycle, and glycogen synthesis in liver. This Pantodon buchholzi (Freshwater butterflyfish) protein is Insulin (ins).